Here is a 222-residue protein sequence, read N- to C-terminus: Large ribosomal subunit protein mL64 (222 aa).

Disordered stretches follow at residues 19–46 and 188–222; these read APGS…EDLL and KRLK…APSS. Residues 25–36 show a composition bias toward basic residues; that stretch reads YRARPPPRRRPG. Positions 99-212 form a coiled coil; the sequence is MQESLRVKQL…AAALAAAVAQ (114 aa). A Nuclear localization signal motif is present at residues 184–200; the sequence is KKERKRLKEEKQKRKKE. Residues 203–212 are compositionally biased toward low complexity; the sequence is AAALAAAVAQ.

The protein belongs to the mitochondrion-specific ribosomal protein mL64 family. As to quaternary structure, component of the mitochondrial large ribosomal subunit (mt-LSU). Mature mammalian 55S mitochondrial ribosomes consist of a small (28S) and a large (39S) subunit. The 28S small subunit contains a 12S ribosomal RNA (12S mt-rRNA) and 30 different proteins. The 39S large subunit contains a 16S rRNA (16S mt-rRNA), a copy of mitochondrial valine transfer RNA (mt-tRNA(Val)), which plays an integral structural role, and 52 different proteins. Interacts with GADD45A, GADD45B and GADD45G. Interacts with NR4A1 via the NR4A1 AB domain. Interacts with ATAD3A and ATAD3B. In terms of assembly, (Microbial infection) Interacts with the human papilloma virus type 16 (HPV 16) minor capsid protein L2. Widely expressed. Highly expressed in the thyroid gland, heart, lymph nodes, trachea and adrenal tissues. Expressed at lower level in liver skeletal muscle, kidney, pancreas, testis, ovary and stomach. Barely detectable in adrenal adenoma and papillary thyroid cancer.

It localises to the mitochondrion. The protein resides in the nucleus. Acts as a negative regulator of G1 to S cell cycle phase progression by inhibiting cyclin-dependent kinases. Inhibitory effects are additive with GADD45 proteins but also occur in the absence of GADD45 proteins. Acts as a repressor of the orphan nuclear receptor NR4A1 by inhibiting AB domain-mediated transcriptional activity. May be involved in the hormone-mediated regulation of NR4A1 transcriptional activity. May play a role in mitochondrial protein synthesis. This Homo sapiens (Human) protein is Large ribosomal subunit protein mL64 (GADD45GIP1).